The sequence spans 121 residues: Ribonuclease P protein component (121 aa).

It belongs to the RnpA family. In terms of assembly, consists of a catalytic RNA component (M1 or rnpB) and a protein subunit.

The catalysed reaction is Endonucleolytic cleavage of RNA, removing 5'-extranucleotides from tRNA precursor.. Functionally, RNaseP catalyzes the removal of the 5'-leader sequence from pre-tRNA to produce the mature 5'-terminus. It can also cleave other RNA substrates such as 4.5S RNA. The protein component plays an auxiliary but essential role in vivo by binding to the 5'-leader sequence and broadening the substrate specificity of the ribozyme. This Neisseria meningitidis serogroup A / serotype 4A (strain DSM 15465 / Z2491) protein is Ribonuclease P protein component.